We begin with the raw amino-acid sequence, 484 residues long: Glutamyl-tRNA(Gln) amidotransferase subunit A (484 aa).

Catalysis depends on charge relay system residues Lys76 and Ser151. The Acyl-ester intermediate role is filled by Ser175.

It belongs to the amidase family. GatA subfamily. As to quaternary structure, heterotrimer of A, B and C subunits.

The catalysed reaction is L-glutamyl-tRNA(Gln) + L-glutamine + ATP + H2O = L-glutaminyl-tRNA(Gln) + L-glutamate + ADP + phosphate + H(+). Allows the formation of correctly charged Gln-tRNA(Gln) through the transamidation of misacylated Glu-tRNA(Gln) in organisms which lack glutaminyl-tRNA synthetase. The reaction takes place in the presence of glutamine and ATP through an activated gamma-phospho-Glu-tRNA(Gln). This chain is Glutamyl-tRNA(Gln) amidotransferase subunit A, found in Halorhodospira halophila (strain DSM 244 / SL1) (Ectothiorhodospira halophila (strain DSM 244 / SL1)).